Consider the following 312-residue polypeptide: Urease accessory protein UreD (312 aa).

This sequence belongs to the UreD family. As to quaternary structure, ureD, UreF and UreG form a complex that acts as a GTP-hydrolysis-dependent molecular chaperone, activating the urease apoprotein by helping to assemble the nickel containing metallocenter of UreC. The UreE protein probably delivers the nickel.

The protein localises to the cytoplasm. Functionally, required for maturation of urease via the functional incorporation of the urease nickel metallocenter. In Marinomonas sp. (strain MWYL1), this protein is Urease accessory protein UreD.